Reading from the N-terminus, the 931-residue chain is Protein translocase subunit SecA (931 aa).

ATP-binding positions include Gln87, 105-109 (GEGKT), and Asp515. 4 residues coordinate Zn(2+): Cys915, Cys917, Cys926, and His927.

It belongs to the SecA family. As to quaternary structure, monomer and homodimer. Part of the essential Sec protein translocation apparatus which comprises SecA, SecYEG and auxiliary proteins SecDF-YajC and YidC. The cofactor is Zn(2+).

Its subcellular location is the cell inner membrane. It localises to the cytoplasm. It carries out the reaction ATP + H2O + cellular proteinSide 1 = ADP + phosphate + cellular proteinSide 2.. Its function is as follows. Part of the Sec protein translocase complex. Interacts with the SecYEG preprotein conducting channel. Has a central role in coupling the hydrolysis of ATP to the transfer of proteins into and across the cell membrane, serving both as a receptor for the preprotein-SecB complex and as an ATP-driven molecular motor driving the stepwise translocation of polypeptide chains across the membrane. The sequence is that of Protein translocase subunit SecA from Burkholderia pseudomallei (strain 1106a).